The following is a 380-amino-acid chain: MEEIYAKFVSQKISKTRWRPVPSGSLQTTETFATGSWDNEENCVSLWSIGDFGNLDSDGGFEGDHQLLCDIRHHGDVMDLQFFDQERIVAASSTGCVTVFLHHPNNQTLSVNQQWPAAHYHTGPSSPSYSSAPCTGIVCDNPEIVTVGEDGRINLFRVDHKEAVRTIDNADSSTLHAVTFLRTPEIVTVNSIGQLKIWDFRQQGSEPCQILSLTGDRVPLHCVDRHPDQQHVVATGGQDGMLSIWDVRQGTMPVSLLKAHEAEMWEVHFHPSNPDHLFTCSEDGSLWHWDASTDAPEKSSLFHQGGRSSTFLSHSLSNQAGVHQSLVSSWLSTDPAKDRIEITSLLPSRTLSVNSLDVLGPCLVCGTDAEAIYVTRQLFS.

Met1 carries the post-translational modification N-acetylmethionine. WD repeat units follow at residues 8-57 (FVSQ…NLDS), 72-110 (RHHG…QTLS), 119-166 (HYHT…AVRT), 170-208 (ADSS…SEPC), 215-255 (GDRV…MPVS), and 259-299 (AHEA…PEKS).

As to quaternary structure, component of the Nup107-160 subcomplex of the nuclear pore complex (NPC). The Nup107-160 subcomplex includes NUP160, NUP133, NUP107, NUP98, NUP85, NUP43, NUP37, SEH1 and SEC13.

Its subcellular location is the chromosome. The protein localises to the centromere. It is found in the kinetochore. The protein resides in the nucleus. It localises to the nuclear pore complex. In terms of biological role, component of the Nup107-160 subcomplex of the nuclear pore complex (NPC). The Nup107-160 subcomplex is required for the assembly of a functional NPC. The Nup107-160 subcomplex is also required for normal kinetochore microtubule attachment, mitotic progression and chromosome segregation. This chain is Nucleoporin Nup43 (Nup43), found in Mus musculus (Mouse).